The primary structure comprises 492 residues: Ketol-acid reductoisomerase (NADP(+)) (492 aa).

Residues 15 to 208 (AQLGKCRFMA…GAHRAGVLES (194 aa)) form the KARI N-terminal Rossmann domain. Residues 45–48 (CGAQ), arginine 68, arginine 76, serine 78, and 108–110 (DKQ) contribute to the NADP(+) site. Residue histidine 132 is part of the active site. NADP(+) is bound at residue glycine 158. KARI C-terminal knotted domains are found at residues 209–344 (SFVA…NSPE) and 345–485 (YDGK…MTDM). Mg(2+)-binding residues include aspartate 217, glutamate 221, glutamate 389, and glutamate 393. Serine 414 provides a ligand contact to substrate.

It belongs to the ketol-acid reductoisomerase family. Requires Mg(2+) as cofactor.

It carries out the reaction (2R)-2,3-dihydroxy-3-methylbutanoate + NADP(+) = (2S)-2-acetolactate + NADPH + H(+). The enzyme catalyses (2R,3R)-2,3-dihydroxy-3-methylpentanoate + NADP(+) = (S)-2-ethyl-2-hydroxy-3-oxobutanoate + NADPH + H(+). Its pathway is amino-acid biosynthesis; L-isoleucine biosynthesis; L-isoleucine from 2-oxobutanoate: step 2/4. It functions in the pathway amino-acid biosynthesis; L-valine biosynthesis; L-valine from pyruvate: step 2/4. Functionally, involved in the biosynthesis of branched-chain amino acids (BCAA). Catalyzes an alkyl-migration followed by a ketol-acid reduction of (S)-2-acetolactate (S2AL) to yield (R)-2,3-dihydroxy-isovalerate. In the isomerase reaction, S2AL is rearranged via a Mg-dependent methyl migration to produce 3-hydroxy-3-methyl-2-ketobutyrate (HMKB). In the reductase reaction, this 2-ketoacid undergoes a metal-dependent reduction by NADPH to yield (R)-2,3-dihydroxy-isovalerate. The polypeptide is Ketol-acid reductoisomerase (NADP(+)) (Photorhabdus laumondii subsp. laumondii (strain DSM 15139 / CIP 105565 / TT01) (Photorhabdus luminescens subsp. laumondii)).